The chain runs to 42 residues: uncharacterized protein (42 aa).

A helical transmembrane segment spans residues 5 to 27; it reads FLHTNITIIPHSVLYVSLSYYII.

The protein localises to the membrane. This is an uncharacterized protein from Saccharomyces cerevisiae (strain ATCC 204508 / S288c) (Baker's yeast).